Consider the following 221-residue polypeptide: Potassium voltage-gated channel subfamily E member 4 (221 aa).

The Extracellular segment spans residues 1–86; it reads MHFLTIYPNC…AGGGSGNGNE (86 aa). N-linked (GlcNAc...) asparagine glycosylation occurs at Asn9. Polar residues predominate over residues 58–72; the sequence is LNSTHPGTAASSSPL. The interval 58–77 is disordered; sequence LNSTHPGTAASSSPLESRAA. Residues 87-107 traverse the membrane as a helical segment; it reads YFYILVVMSFYGIFLIGIMLG. Residues 108 to 221 lie on the Cytoplasmic side of the membrane; sequence YMKSKRREKK…GSSENIHQNS (114 aa). The tract at residues 175 to 221 is disordered; it reads SVSSESSSPDVHLTIQEEGADDELEETSETPLNESSEGSSENIHQNS. Positions 192–202 are enriched in acidic residues; it reads EGADDELEETS. Positions 203–221 are enriched in polar residues; the sequence is ETPLNESSEGSSENIHQNS.

It belongs to the potassium channel KCNE family. Forms heterooligomers with KCNA3, inhibiting its activity by impairing localization to the cell membrane. The stoichiometry of KCNA3 and KCNE4 in the heterooligomers are 4:1, 4:2, 4:3 or 4:4 respectively. Increasing the number of KCNE4 subunits steadily slows the activation KCNA3 and decreases its abundance at the cell membrane. However, a single subunit of KCNE4 is sufficient for the cooperative enhancement of the inactivating function of the channel. However, a single subunit of KCNE4 is sufficient for the cooperative enhancement of the inactivating function of the channel. Interacts with KCNQ1; impairs KCNQ1 localization in lipid rafts and inhibits voltage-gated potassium channel activity. As to expression, predominantly expressed in embryo and adult uterus. Low expression found in kidney, small intestine, lung and heart. Detected in kidney, thymus, and uterus (at protein level).

The protein resides in the membrane. In terms of biological role, ancillary protein that functions as a regulatory subunit of the voltage-gated potassium (Kv) channel complex composed of pore-forming and potassium-conducting alpha subunits and of regulatory beta subunits. KCNE4 beta subunit modulates the gating kinetics and enhances stability of the channel complex. Associates with KCNQ1/KVLTQ1 alpha subunit to inhibit potassium currents. Functionally, may inhibit KCNQ4-mediated potassium currents. The chain is Potassium voltage-gated channel subfamily E member 4 from Homo sapiens (Human).